The primary structure comprises 220 residues: Vesicle-associated membrane protein 7 (220 aa).

Ala-2 is modified (N-acetylalanine; partial). Residues 2 to 188 (AILFAVVARG…ARAMCMKNLK (187 aa)) lie on the Cytoplasmic side of the membrane. Residues 7 to 110 (VVARGTTILA…AMNSEFSSVL (104 aa)) enclose the Longin domain. Positions 125 to 185 (KVMETQAQVD…RNLARAMCMK (61 aa)) constitute a v-SNARE coiled-coil homology domain. Ser-167 and Ser-168 each carry phosphoserine. The helical; Anchor for type IV membrane protein transmembrane segment at 189-209 (LTIIIIIVSIVFIYIIVSPLC) threads the bilayer. Residues 210-220 (GGFTWPSCVKK) are Vesicular-facing.

This sequence belongs to the synaptobrevin family. Component of the SNARE complex composed of STX4, SNAP23 and VAMP7 that binds SYT7 during lysosomal exocytosis. Component of the SNARE complex composed of STX7, STX8, VAMP7 and VTI1B that is required for heterotypic fusion of late endosomes with lysosomes. May interact with STX17. Interacts with PICALM. Interacts with RAB21. In terms of tissue distribution, detected in all tissues tested.

It is found in the cytoplasmic vesicle. The protein localises to the secretory vesicle membrane. The protein resides in the golgi apparatus. It localises to the trans-Golgi network membrane. Its subcellular location is the late endosome membrane. It is found in the lysosome membrane. The protein localises to the endoplasmic reticulum membrane. The protein resides in the phagosome membrane. It localises to the synapse. Its subcellular location is the synaptosome. In terms of biological role, involved in the targeting and/or fusion of transport vesicles to their target membrane during transport of proteins from the early endosome to the lysosome. Required for heterotypic fusion of late endosomes with lysosomes and homotypic lysosomal fusion. Required for calcium regulated lysosomal exocytosis. Involved in the export of chylomicrons from the endoplasmic reticulum to the cis Golgi. Required for exocytosis of mediators during eosinophil and neutrophil degranulation, and target cell killing by natural killer cells. Required for focal exocytosis of late endocytic vesicles during phagosome formation. The protein is Vesicle-associated membrane protein 7 (VAMP7) of Homo sapiens (Human).